Here is a 529-residue protein sequence, read N- to C-terminus: Putative UPF0481 protein At3g02645 (529 aa).

2 N-linked (GlcNAc...) asparagine glycosylation sites follow: Asn365 and Asn403. The chain crosses the membrane as a helical span at residues Ile498 to Leu518.

This sequence belongs to the UPF0481 family.

It is found in the membrane. The polypeptide is Putative UPF0481 protein At3g02645 (Arabidopsis thaliana (Mouse-ear cress)).